The chain runs to 308 residues: MPTATAAQPLRPFGTVLSAVVTPFTASGAVDLDAAAALAVHLVEHGHDGLVVSGTTGESPTTSDEEKDRLLRAVLDAVGDRVHVLAGVGTNDTAHTLELARAAEKAGAHGLLVVTPYYNKPPQAALAHHFTTVADGTGLPVMLYDIPGRSGVPIETETLVRVAEHERIVAVKDAKGDSWGTSWVLARTELAYYSGDDAVNLPLLAQGASGIVSVVSHVAGREYAAMVAAVDAGDLVTARAIHTRLLPAVRGIMTRTQGVVAVKAALELTGVLSGRAVRPPLLPATPEEVAALAADLALAGLAPAPLDA.

T56 lines the pyruvate pocket. Y144 serves as the catalytic Proton donor/acceptor. K172 serves as the catalytic Schiff-base intermediate with substrate. V212 serves as a coordination point for pyruvate.

This sequence belongs to the DapA family. In terms of assembly, homotetramer; dimer of dimers.

The protein resides in the cytoplasm. It catalyses the reaction L-aspartate 4-semialdehyde + pyruvate = (2S,4S)-4-hydroxy-2,3,4,5-tetrahydrodipicolinate + H2O + H(+). The protein operates within amino-acid biosynthesis; L-lysine biosynthesis via DAP pathway; (S)-tetrahydrodipicolinate from L-aspartate: step 3/4. Catalyzes the condensation of (S)-aspartate-beta-semialdehyde [(S)-ASA] and pyruvate to 4-hydroxy-tetrahydrodipicolinate (HTPA). This chain is 4-hydroxy-tetrahydrodipicolinate synthase, found in Kineococcus radiotolerans (strain ATCC BAA-149 / DSM 14245 / SRS30216).